The primary structure comprises 179 residues: Inner membrane-spanning protein YciB (179 aa).

5 helical membrane passes run 3–23, 49–69, 76–96, 119–139, and 149–169; these read FLYDLFPVILFFIVYKLFGIY, NALIMSGVIIVVFGGATLWLQ, WKPTILYWVFTVGLLGSQWLF, LNLAWAIFFLLLGFLNLYVAY, and FKLFGTMGLMFVFVIGQTLLL.

The protein belongs to the YciB family.

Its subcellular location is the cell inner membrane. In terms of biological role, plays a role in cell envelope biogenesis, maintenance of cell envelope integrity and membrane homeostasis. This chain is Inner membrane-spanning protein YciB, found in Methylobacillus flagellatus (strain ATCC 51484 / DSM 6875 / VKM B-1610 / KT).